The chain runs to 114 residues: Large ribosomal subunit protein bL21 (114 aa).

This sequence belongs to the bacterial ribosomal protein bL21 family. Part of the 50S ribosomal subunit. Contacts protein L20.

Its function is as follows. This protein binds to 23S rRNA in the presence of protein L20. The polypeptide is Large ribosomal subunit protein bL21 (Protochlamydia amoebophila (strain UWE25)).